The chain runs to 372 residues: Protein-glutamate methylesterase/protein-glutamine glutaminase 1 (372 aa).

Residues 4–121 form the Response regulatory domain; it reads KVLVVDDSSF…ATNKDDAILL (118 aa). Asp-55 carries the post-translational modification 4-aspartylphosphate. The disordered stretch occupies residues 138-174; sequence VVRPTTPTPPPRSSASSVLGGVSTHTQPAPVRSSHAA. The region spanning 179–372 is the CheB-type methylesterase domain; that stretch reads SGKQYKLLLI…ESILKESARG (194 aa). Active-site residues include Ser-191, His-218, and Asp-314.

It belongs to the CheB family. In terms of processing, phosphorylated by CheA. Phosphorylation of the N-terminal regulatory domain activates the methylesterase activity.

The protein localises to the cytoplasm. The catalysed reaction is [protein]-L-glutamate 5-O-methyl ester + H2O = L-glutamyl-[protein] + methanol + H(+). It carries out the reaction L-glutaminyl-[protein] + H2O = L-glutamyl-[protein] + NH4(+). Functionally, involved in chemotaxis. Part of a chemotaxis signal transduction system that modulates chemotaxis in response to various stimuli. Catalyzes the demethylation of specific methylglutamate residues introduced into the chemoreceptors (methyl-accepting chemotaxis proteins or MCP) by CheR. Also mediates the irreversible deamidation of specific glutamine residues to glutamic acid. This chain is Protein-glutamate methylesterase/protein-glutamine glutaminase 1, found in Shewanella sp. (strain MR-4).